We begin with the raw amino-acid sequence, 323 residues long: Germination protease (323 aa).

Positions 1–6 (MSVRTD) are excised as a propeptide.

The protein belongs to the peptidase A25 family. Homotetramer. Autoproteolytically processed. The inactive tetrameric zymogen termed p46 autoprocesses to a smaller form termed p41, which is active only during spore germination.

It catalyses the reaction Endopeptidase action with P4 Glu or Asp, P1 preferably Glu &gt; Asp, P1' hydrophobic and P2' Ala.. In terms of biological role, initiates the rapid degradation of small, acid-soluble proteins during spore germination. In Clostridium tetani (strain Massachusetts / E88), this protein is Germination protease.